Here is a 324-residue protein sequence, read N- to C-terminus: PDZ domain-containing protein MAGIX (324 aa).

Positions 1–26 are disordered; it reads MDSRAGNTADPRGGRRGGGLQGSRSP. In terms of domain architecture, PDZ spans 128-212; that stretch reads SVELTRGPAG…HLCLVLQRPQ (85 aa). The segment covering 216–241 has biased composition (basic and acidic residues); that stretch reads GSRIKEVGGHRKTDRSLDPRGSRVES. Residues 216–263 form a disordered region; that stretch reads GSRIKEVGGHRKTDRSLDPRGSRVESRSTISPVHHRPKTRTSPRPSPE. S261 is modified (phosphoserine).

The protein is PDZ domain-containing protein MAGIX (Magix) of Mus musculus (Mouse).